A 332-amino-acid chain; its full sequence is T-cell leukemia homeobox protein 1 (332 aa).

The homeobox DNA-binding region spans K203–T262. N6-acetyllysine is present on K238.

In terms of tissue distribution, expressed in various embryonic tissues, including branchial arches, some component of the nervous system and spleen.

The protein resides in the nucleus. In terms of biological role, controls the genesis of the spleen. Binds to the DNA sequence 5'-GGCGGTAAGTGG-3'. The sequence is that of T-cell leukemia homeobox protein 1 (Tlx1) from Mus musculus (Mouse).